We begin with the raw amino-acid sequence, 121 residues long: Protein yippee-like At3g55890 (121 aa).

Residues 12 to 109 (NIYICKLCKT…LELYKISGPH (98 aa)) enclose the Yippee domain. Zn(2+)-binding residues include Cys-16, Cys-19, Cys-72, and Cys-75.

It belongs to the yippee family.

The sequence is that of Protein yippee-like At3g55890 from Arabidopsis thaliana (Mouse-ear cress).